Reading from the N-terminus, the 142-residue chain is Large ribosomal subunit protein uL13 (142 aa).

Belongs to the universal ribosomal protein uL13 family. As to quaternary structure, part of the 50S ribosomal subunit.

Its function is as follows. This protein is one of the early assembly proteins of the 50S ribosomal subunit, although it is not seen to bind rRNA by itself. It is important during the early stages of 50S assembly. This chain is Large ribosomal subunit protein uL13, found in Proteus mirabilis (strain HI4320).